The sequence spans 296 residues: Protoheme IX farnesyltransferase (296 aa).

At 1–9 (MMFKQYLQV) the chain is on the cytoplasmic side. A helical membrane pass occupies residues 10–28 (TKPGIIFGNLISVIGGFLL). Residues 29 to 37 (ASKGSIDYP) are Periplasmic-facing. Residues 38–56 (LFIYTLVGVSLVVASGCVF) traverse the membrane as a helical segment. Residues 57–78 (NNFIDRDIDRKMERTKNRVLVK) lie on the Cytoplasmic side of the membrane. A helical membrane pass occupies residues 79–97 (GLISPGVSLVYATLLGIAG). The Periplasmic segment spans residues 98–107 (FMLLWFGANP). The helical transmembrane segment at 108 to 126 (LACWLGVMGFVVYVGIYSL) threads the bilayer. Residues 127-197 (YMKRHSVYGT…YQAANIPVLP (71 aa)) lie on the Cytoplasmic side of the membrane. A helical membrane pass occupies residues 198–216 (VVKGISVAKNHITLYIIAF). Residues 217-228 (AVATLMLTLGGY) are Periplasmic-facing. The chain crosses the membrane as a helical span at residues 229 to 247 (AGYKYLVVAAAVSVWWLGM). Residues 248–268 (ALRGYKVEDDKVWARKLFGFS) are Cytoplasmic-facing. A helical membrane pass occupies residues 269-287 (IIAITALSIMMSVDFMVPN). Over 288–296 (SQSLLTYVW) the chain is Periplasmic.

Belongs to the UbiA prenyltransferase family. Protoheme IX farnesyltransferase subfamily.

It is found in the cell inner membrane. It catalyses the reaction heme b + (2E,6E)-farnesyl diphosphate + H2O = Fe(II)-heme o + diphosphate. The protein operates within porphyrin-containing compound metabolism; heme O biosynthesis; heme O from protoheme: step 1/1. Functionally, converts heme B (protoheme IX) to heme O by substitution of the vinyl group on carbon 2 of heme B porphyrin ring with a hydroxyethyl farnesyl side group. The sequence is that of Protoheme IX farnesyltransferase from Salmonella arizonae (strain ATCC BAA-731 / CDC346-86 / RSK2980).